Here is a 210-residue protein sequence, read N- to C-terminus: 7-methyl-GTP pyrophosphatase (210 aa).

The active-site Proton acceptor is D79.

This sequence belongs to the Maf family. YceF subfamily. A divalent metal cation is required as a cofactor.

The protein resides in the cytoplasm. It catalyses the reaction N(7)-methyl-GTP + H2O = N(7)-methyl-GMP + diphosphate + H(+). Functionally, nucleoside triphosphate pyrophosphatase that hydrolyzes 7-methyl-GTP (m(7)GTP). May have a dual role in cell division arrest and in preventing the incorporation of modified nucleotides into cellular nucleic acids. This chain is 7-methyl-GTP pyrophosphatase, found in Burkholderia orbicola (strain AU 1054).